A 337-amino-acid chain; its full sequence is Probable RuBisCO transcriptional regulator (337 aa).

Residues 6-63 enclose the HTH lysR-type domain; it reads FTLDQLRILKAIAVEGSFKRAADSLYVSQPAVSLQVQNLERQLDVPLFDRGGRRAQLT. Positions 23 to 42 form a DNA-binding region, H-T-H motif; that stretch reads FKRAADSLYVSQPAVSLQVQ.

Belongs to the LysR transcriptional regulatory family.

Trans-acting transcriptional regulator of RuBisCO genes (rbcL and rbcS) expression. The protein is Probable RuBisCO transcriptional regulator (rbcR) of Nostoc sp. (strain PCC 7120 / SAG 25.82 / UTEX 2576).